The sequence spans 1179 residues: DNA-directed RNA polymerase subunit beta (1179 aa).

Belongs to the RNA polymerase beta chain family. The RNAP catalytic core consists of 2 alpha, 1 beta, 1 beta' and 1 omega subunit. When a sigma factor is associated with the core the holoenzyme is formed, which can initiate transcription.

It carries out the reaction RNA(n) + a ribonucleoside 5'-triphosphate = RNA(n+1) + diphosphate. In terms of biological role, DNA-dependent RNA polymerase catalyzes the transcription of DNA into RNA using the four ribonucleoside triphosphates as substrates. The sequence is that of DNA-directed RNA polymerase subunit beta from Oceanobacillus iheyensis (strain DSM 14371 / CIP 107618 / JCM 11309 / KCTC 3954 / HTE831).